The chain runs to 31 residues: Maltose/maltodextrin import ATP-binding protein MalK (31 aa).

The protein belongs to the ABC transporter superfamily. Maltooligosaccharide importer (TC 3.A.1.1.1) family. The complex is composed of two ATP-binding proteins (MalK), two transmembrane proteins (MalG and MalK) and a solute-binding protein (MalE).

The protein localises to the cell inner membrane. It catalyses the reaction D-maltose(out) + ATP + H2O = D-maltose(in) + ADP + phosphate + H(+). Functionally, part of the ABC transporter complex MalEFGK involved in maltose/maltodextrin import. Responsible for energy coupling to the transport system. The polypeptide is Maltose/maltodextrin import ATP-binding protein MalK (Photorhabdus luminescens (Xenorhabdus luminescens)).